The primary structure comprises 605 residues: Cystathionine gamma-synthase-like enzyme iboG1 (605 aa).

Tyrosine 289 serves as a coordination point for substrate. Lysine 393 is subject to N6-(pyridoxal phosphate)lysine.

Belongs to the trans-sulfuration enzymes family. Pyridoxal 5'-phosphate is required as a cofactor.

Its pathway is secondary metabolite biosynthesis. In terms of biological role, cystathionine gamma-synthase-like enzyme; part of the gene cluster that mediates the biosynthesis of the psychoactive metabolites ibotenic acid and muscimol. The first committed step is glutamate hydroxylation by the 2-oxoglutarate-dependent dioxygenase iboH, and the last step is decarboxylation of ibotenic acid to muscimol by the decarboxylase iboD. The order of the intermediate reactions is somewhat ambiguous. IboA likely activates the carboxylic acid at position 5 to introduce an amide bond, and the flavin monooxygenase iboF generates the N-O bond. There are several options for the latter step. One option is that iboF directly hydroxylates the amide nitrogen formed by iboA to produce a hydroxamic acid species. Another option is that iboF hydroxylates an external N-containing compound, whose resulting N-O bond is subsequently introduced into the hydroxyglutamate scaffold. The paralogous PLP-dependent cystathionine gamma-synthase-like enzymes iboG1 and iboG2 are likely involved in substitution of the OH group at position 3 by the O-N moiety. The first cyclic intermediate is most probably tricholomic acid which is likely desaturated to ibotenic acid by the cytochrome P450 monooxygenase iboC. This chain is Cystathionine gamma-synthase-like enzyme iboG1 (iboG1), found in Amanita muscaria (strain Koide BX008).